The chain runs to 1530 residues: Coiled-coil domain-containing protein 141 (1530 aa).

At T91 the chain carries Phosphothreonine. 3 coiled-coil regions span residues 642-706 (VKNE…EALM), 758-783 (VKEKSQQLKDLIHFHQKQKERIQDYE), and 861-970 (SNVS…KTSD). The segment at 1210-1241 (SPDDISLPPLPGSPESPLAPSDMEVEEPVSSS) is disordered. The 122-residue stretch at 1409–1530 (PNFSRLLSNV…VSLMYWLLTQ (122 aa)) folds into the Ig-like domain.

Interacts with DISC1. Interacts preferentially with phosphorylated forms of myosin regulatory light chain (MRLC). Interacts (via the N-terminal region) with HDAC6; inhibits the deacetylase activity of HDAC6. Interacts with KIBRA (via the C-terminal region); retains AMPAR in the cytosol after internalization. Post-translationally, ubiquitinated and degradated by the CDC20-APC/C pathway. During brain development, CDC20-APC/C complex degrades CCDC141 after centrosome translocation into the dilated area. CCDC141 is restabilized in the dilation until the centrosome enters the dilation, at which point it is once again immediately destabilized by CDC20-APC/C complex. The oscillatory regulation of CCDC141 protein is needed for proper cortical migration. In terms of processing, phosphorylation at Thr-91 by PLK1 affects CCDC141 degradation.

The protein resides in the cytoplasm. It is found in the cytoskeleton. Its subcellular location is the microtubule organizing center. It localises to the centrosome. Functionally, plays a critical role in cortical radial and GnRH neurons migration during brain development. Regulates cortical radial migration by negatively controlling the activity of histone deacetylase 6 (HDAC6) and promotes centrosome maturation. CAMDI is required for dilation formation of cortical neurons during radial migration. Plays a critical role in learning and memory performance through regulation of AMPA-selective glutamate receptors (AMPARs) cell surface expression in competition with KIBRA. This chain is Coiled-coil domain-containing protein 141 (CCDC141), found in Homo sapiens (Human).